The primary structure comprises 36 residues: MSASFLPSILTPVVTLVFPGLMFALFFVLIEQEEIA.

A helical transmembrane segment spans residues 9 to 29; the sequence is ILTPVVTLVFPGLMFALFFVL.

The protein belongs to the PsaI family.

The protein resides in the plastid. It localises to the chloroplast thylakoid membrane. May help in the organization of the PsaL subunit. The polypeptide is Photosystem I reaction center subunit VIII (Emiliania huxleyi (Coccolithophore)).